Consider the following 304-residue polypeptide: MNRLAVEIPGLSLKNPIMPASGCFGFGQEYSKYYDLNELGAIMAKAVTPEPRLGNPTPRVAETASGMLNAIGLQNPGLEHVLAHELPFLEQFETPIIANVAGATEDDYVQVCARIGESKAVKAIELNISCPNVKHGGIAFGTDPDVAHRLTKAVKNVATVPVYVKLSPNVADIVSIAQAIEAAGADGLTMINTLLGMRIDLKTRKPIIANGTGGLSGPAIKPVAIRMIHQVREVSNIPIIGMGGVQTVDDVLEFLIAGADAVAVGTMNFTDPFICPKLISELPKRMDELGISSLQELKKERTNQ.

FMN contacts are provided by residues S21 and 45-46 (KA). Substrate-binding positions include K45 and 69–73 (NAIGL). The FMN site is built by N99 and N127. Position 127 (N127) interacts with substrate. Catalysis depends on C130, which acts as the Nucleophile. FMN is bound by residues K165 and I191. A substrate-binding site is contributed by 192–193 (NT). FMN contacts are provided by residues G217, 243–244 (GG), and 265–266 (GT).

This sequence belongs to the dihydroorotate dehydrogenase family. Type 1 subfamily. Heterotetramer of 2 PyrK and 2 PyrD type B subunits. FMN serves as cofactor.

It is found in the cytoplasm. The catalysed reaction is (S)-dihydroorotate + NAD(+) = orotate + NADH + H(+). It participates in pyrimidine metabolism; UMP biosynthesis via de novo pathway; orotate from (S)-dihydroorotate (NAD(+) route): step 1/1. Its function is as follows. Catalyzes the conversion of dihydroorotate to orotate with NAD(+) as electron acceptor. The polypeptide is Dihydroorotate dehydrogenase B (NAD(+)), catalytic subunit (pyrD) (Listeria monocytogenes serotype 4b (strain CLIP80459)).